The following is a 198-amino-acid chain: Remorin (198 aa).

The span at 1-11 (MAELEAKKVEI) shows a compositional bias: basic and acidic residues. The tract at residues 1–24 (MAELEAKKVEIVDPAPPAPGPVEA) is disordered. Residues 97 to 184 (EESEKSKAEN…LKAEELAAKY (88 aa)) adopt a coiled-coil conformation.

The protein belongs to the remorin family. In terms of processing, the N-terminus is blocked. Post-translationally, phosphorylated.

It localises to the cell membrane. In terms of biological role, binds to both simple and complex galacturonides. May be involved in cell-to-cell signaling and molecular transport. The polypeptide is Remorin (Solanum tuberosum (Potato)).